A 470-amino-acid polypeptide reads, in one-letter code: UDP-glycosyltransferase 91A1 (470 aa).

Residues S290, 350-352 (VEQ), 367-375 (HPGWGTIIE), and 389-392 (VYDQ) contribute to the UDP-alpha-D-glucose site.

This sequence belongs to the UDP-glycosyltransferase family.

This Arabidopsis thaliana (Mouse-ear cress) protein is UDP-glycosyltransferase 91A1 (UGT91A1).